A 1284-amino-acid chain; its full sequence is Putative late blight resistance protein homolog R1B-16 (1284 aa).

A coiled-coil region spans residues 533 to 555 (PRMNEEIVGFKDVIENLRNQLLN). The NB-ARC domain maps to 534–821 (RMNEEIVGFK…SESFIKSSEG (288 aa)). Position 567-574 (567-574 (GMPGLGKT)) interacts with ATP. 8 LRR repeats span residues 942 to 966 (FKFL…LFYL), 985 to 1010 (LWNL…VWDM), 1013 to 1036 (LRHL…SAKL), 1085 to 1107 (PIRL…FCIS), 1108 to 1135 (APNL…HLKN), 1159 to 1181 (FPQL…ADDA), 1182 to 1206 (FPNL…FMDI), and 1219 to 1243 (ESVV…NFKL). Residues 1217–1284 (CNESVVKSAM…VEKQRKRGML (68 aa)) enclose the HMA domain.

It belongs to the disease resistance NB-LRR family.

Its subcellular location is the cytoplasm. It localises to the membrane. Confers resistance to late blight (Phytophthora infestans) races carrying the avirulence gene Avr1. Resistance proteins guard the plant against pathogens that contain an appropriate avirulence protein via an indirect interaction with this avirulence protein. That triggers a defense system including the hypersensitive response, which restricts the pathogen growth. In Solanum demissum (Wild potato), this protein is Putative late blight resistance protein homolog R1B-16 (R1B-16).